The chain runs to 577 residues: Probable HECT-type ubiquitin ligase-interacting protein creD (577 aa).

Disordered regions lie at residues 376-398 (LDPA…GTLS) and 428-566 (NLHA…EEER). Polar residues-rich tracts occupy residues 428-447 (NLHA…NQLE) and 460-472 (SSGS…TSPE). Residues 473–486 (LSRRPSDEVDHDHV) are compositionally biased toward basic and acidic residues. Residues 528 to 544 (SPQQAHVRSANRSSSYF) are compositionally biased toward polar residues.

Belongs to the arrestin family. Interacts with hulA.

Functionally, component of the regulatory network controlling carbon source utilization through ubiquitination and deubiquitination involving creA, creB, creC, creD and acrB. May be involved in signaling by recognizing appropriately phosphorylated substrates via its arrestin domains and then recruit a HECT-type ubiquitin ligase such as hulA, leading to ubiquitination of the substrate, providing a link between ubiquitination and phosphorylation in protein regulation and stability. The protein is Probable HECT-type ubiquitin ligase-interacting protein creD (creD) of Aspergillus terreus (strain NIH 2624 / FGSC A1156).